The following is a 366-amino-acid chain: Protein FAM110B (366 aa).

3 disordered regions span residues 127–150 (SSEG…HRDT), 163–182 (KVYP…HVSR), and 214–253 (IPCS…PSLQ). Ser-234 and Ser-297 each carry phosphoserine. Residues 313 to 333 (DCEQSQDSNSDLRNDDSANDR) are disordered. Basic and acidic residues predominate over residues 322-331 (SDLRNDDSAN).

The protein belongs to the FAM110 family.

The protein localises to the cytoplasm. Its subcellular location is the cytoskeleton. It localises to the microtubule organizing center. It is found in the centrosome. This is Protein FAM110B (Fam110b) from Rattus norvegicus (Rat).